Here is a 364-residue protein sequence, read N- to C-terminus: Biotin synthase (364 aa).

The segment at 14-36 (DTIPPGTETPYASPSHARTEEAP) is disordered. The Radical SAM core domain occupies 70–308 (RKGPLATTCG…QRDILVCGGR (239 aa)). [4Fe-4S] cluster contacts are provided by cysteine 88, cysteine 92, and cysteine 95. The [2Fe-2S] cluster site is built by cysteine 164 and cysteine 233.

This sequence belongs to the radical SAM superfamily. Biotin synthase family. In terms of assembly, homodimer. [4Fe-4S] cluster is required as a cofactor. Requires [2Fe-2S] cluster as cofactor.

It carries out the reaction (4R,5S)-dethiobiotin + (sulfur carrier)-SH + 2 reduced [2Fe-2S]-[ferredoxin] + 2 S-adenosyl-L-methionine = (sulfur carrier)-H + biotin + 2 5'-deoxyadenosine + 2 L-methionine + 2 oxidized [2Fe-2S]-[ferredoxin]. It participates in cofactor biosynthesis; biotin biosynthesis; biotin from 7,8-diaminononanoate: step 2/2. Catalyzes the conversion of dethiobiotin (DTB) to biotin by the insertion of a sulfur atom into dethiobiotin via a radical-based mechanism. This is Biotin synthase from Nitratidesulfovibrio vulgaris (strain DSM 19637 / Miyazaki F) (Desulfovibrio vulgaris).